The primary structure comprises 104 residues: Viral histone-like protein (104 aa).

It belongs to the bacterial histone-like protein family. Homodimer.

It is found in the virion. Its activity is regulated as follows. Stilbene derivatives SD1 and SD4 disrupt the binding between pA104R and DNA and inhibit the viral replication in primary alveolar macrophages. DNA-binding protein that plays a critical role in nucleoid compaction, genome replication and DNA replication and transcription. Binds to both ssDNA and dsDNA with a binding site covering about 15 nucleotides. Displays DNA-supercoiling activity only when associated with the viral DNA topoisomerase 2. This African swine fever virus (strain Badajoz 1971 Vero-adapted) (Ba71V) protein is Viral histone-like protein.